The primary structure comprises 329 residues: Lipoyl synthase (329 aa).

Residues Cys-72, Cys-77, Cys-83, Cys-98, Cys-102, Cys-105, and Ser-313 each coordinate [4Fe-4S] cluster. The Radical SAM core domain occupies 83-303 (CWSHGTATIM…QIGLKKGFFE (221 aa)).

It belongs to the radical SAM superfamily. Lipoyl synthase family. Requires [4Fe-4S] cluster as cofactor.

Its subcellular location is the cytoplasm. The enzyme catalyses [[Fe-S] cluster scaffold protein carrying a second [4Fe-4S](2+) cluster] + N(6)-octanoyl-L-lysyl-[protein] + 2 oxidized [2Fe-2S]-[ferredoxin] + 2 S-adenosyl-L-methionine + 4 H(+) = [[Fe-S] cluster scaffold protein] + N(6)-[(R)-dihydrolipoyl]-L-lysyl-[protein] + 4 Fe(3+) + 2 hydrogen sulfide + 2 5'-deoxyadenosine + 2 L-methionine + 2 reduced [2Fe-2S]-[ferredoxin]. It functions in the pathway protein modification; protein lipoylation via endogenous pathway; protein N(6)-(lipoyl)lysine from octanoyl-[acyl-carrier-protein]: step 2/2. Catalyzes the radical-mediated insertion of two sulfur atoms into the C-6 and C-8 positions of the octanoyl moiety bound to the lipoyl domains of lipoate-dependent enzymes, thereby converting the octanoylated domains into lipoylated derivatives. The polypeptide is Lipoyl synthase (Legionella pneumophila (strain Corby)).